The chain runs to 432 residues: C4-dicarboxylate transport protein (432 aa).

8 helical membrane-spanning segments follow: residues 8–28 (ILYV…HYWP), 44–64 (LIKM…IAGM), 78–98 (LLYF…AAHL), 148–168 (GDIL…AVLG), 188–208 (IVHV…AFTI), 222–242 (LIGT…GTIA), 307–327 (IYMT…LTLM), and 355–375 (AATL…ILGI).

This sequence belongs to the dicarboxylate/amino acid:cation symporter (DAACS) (TC 2.A.23) family.

The protein resides in the cell inner membrane. In terms of biological role, responsible for the transport of dicarboxylates such as succinate, fumarate, and malate from the periplasm across the membrane. In Cupriavidus necator (strain ATCC 17699 / DSM 428 / KCTC 22496 / NCIMB 10442 / H16 / Stanier 337) (Ralstonia eutropha), this protein is C4-dicarboxylate transport protein.